Reading from the N-terminus, the 392-residue chain is Pannexin-3 (392 aa).

Residues 1-39 (MSLAHTAAEYMLSDALLPDRRGSRLKGLRLELPLDKMVK) are Cytoplasmic-facing. The chain crosses the membrane as a helical span at residues 40–60 (FITVGFPLLLMSLAFAQEFSS). Residues 61–113 (GSPISCFSPSNFSVRQAAYVDSSCWDSLAHHTQDKAGQYKVKSLWPHKALPYS) lie on the Extracellular side of the membrane. Asparagine 71 carries an N-linked (GlcNAc...) asparagine glycan. Residues 114-134 (LLALAVAMYLPVLLWQYVAVP) traverse the membrane as a helical segment. Topologically, residues 135–215 (SLSSDLLFII…VATYLLRNAL (81 aa)) are cytoplasmic. A helical transmembrane segment spans residues 216–236 (LLLFTSATYLYLGQFHLDVFF). At 237 to 267 (QDEFNCFIKTGLLHDETHVPELITCRLTSLS) the chain is on the extracellular side. A helical membrane pass occupies residues 268–288 (VFQIVSVSSAAIYTILVPVII). Residues 289–392 (YNLTRLCRWD…LTQHTYDEHA (104 aa)) lie on the Cytoplasmic side of the membrane.

The protein belongs to the pannexin family. As to quaternary structure, homoheptameric. N-glycosylation may play a role in cell surface targeting. As to expression, expressed in skin, cartilage, heart, lung, liver, spleen, thymus and kidney. Not expressed in brain. Expressed in calvarial cells.

The protein resides in the cell membrane. It localises to the endoplasmic reticulum membrane. It carries out the reaction Ca(2+)(in) = Ca(2+)(out). The enzyme catalyses ATP(in) = ATP(out). In terms of biological role, regulator of osteoblast differentiation by functionning as a Ca(2+) channel in the endoplasmic reticulum which regulates calmodulin (CaM) pathways. Allows ATP release into the extracellular space and activation or purinergic receptors. This Mus musculus (Mouse) protein is Pannexin-3 (Panx3).